Reading from the N-terminus, the 321-residue chain is Glyoxylate/hydroxypyruvate reductase B (321 aa).

Active-site residues include Arg237 and Glu266. Catalysis depends on His285, which acts as the Proton donor.

It belongs to the D-isomer specific 2-hydroxyacid dehydrogenase family. GhrB subfamily. As to quaternary structure, homodimer.

It is found in the cytoplasm. The enzyme catalyses glycolate + NADP(+) = glyoxylate + NADPH + H(+). The catalysed reaction is (R)-glycerate + NAD(+) = 3-hydroxypyruvate + NADH + H(+). It carries out the reaction (R)-glycerate + NADP(+) = 3-hydroxypyruvate + NADPH + H(+). Catalyzes the NADPH-dependent reduction of glyoxylate and hydroxypyruvate into glycolate and glycerate, respectively. This chain is Glyoxylate/hydroxypyruvate reductase B, found in Erwinia tasmaniensis (strain DSM 17950 / CFBP 7177 / CIP 109463 / NCPPB 4357 / Et1/99).